Here is a 95-residue protein sequence, read N- to C-terminus: Aspartyl/glutamyl-tRNA(Asn/Gln) amidotransferase subunit C (95 aa).

Belongs to the GatC family. As to quaternary structure, heterotrimer of A, B and C subunits.

It catalyses the reaction L-glutamyl-tRNA(Gln) + L-glutamine + ATP + H2O = L-glutaminyl-tRNA(Gln) + L-glutamate + ADP + phosphate + H(+). The enzyme catalyses L-aspartyl-tRNA(Asn) + L-glutamine + ATP + H2O = L-asparaginyl-tRNA(Asn) + L-glutamate + ADP + phosphate + 2 H(+). Allows the formation of correctly charged Asn-tRNA(Asn) or Gln-tRNA(Gln) through the transamidation of misacylated Asp-tRNA(Asn) or Glu-tRNA(Gln) in organisms which lack either or both of asparaginyl-tRNA or glutaminyl-tRNA synthetases. The reaction takes place in the presence of glutamine and ATP through an activated phospho-Asp-tRNA(Asn) or phospho-Glu-tRNA(Gln). This Prochlorococcus marinus (strain NATL1A) protein is Aspartyl/glutamyl-tRNA(Asn/Gln) amidotransferase subunit C.